The sequence spans 118 residues: Acidic elicitin A1 (118 aa).

A signal peptide spans 1–20 (MNFRALFAATVAALVGSTSA). 3 disulfide bridges follow: cysteine 23–cysteine 91, cysteine 47–cysteine 76, and cysteine 71–cysteine 115.

The protein belongs to the elicitin family.

It localises to the secreted. In terms of biological role, induces local and distal defense responses (incompatible hypersensitive reaction) in plants from the solanaceae and cruciferae families. Elicits leaf necrosis and causes the accumulation of pathogenesis-related proteins. Might interact with the lipidic molecules of the plasma membrane. The chain is Acidic elicitin A1 (B14) from Phytophthora cryptogea.